The sequence spans 205 residues: G-protein coupled receptor (205 aa).

5 helical membrane passes run 40 to 60 (GITLTASVPMIIIVITTMILY), 71 to 91 (FYVITLFASDFVLMWCVFFMT), 107 to 127 (LVYFIYHAVCSYSISMLAIIA), 151 to 171 (IGILLLASSMCAIPTALFVQI), and 185 to 205 (LSSPKAYELFLAVKIVFSFIW). A disulfide bridge connects residues Cys-105 and Cys-181.

This sequence belongs to the G-protein coupled receptor 1 family.

The protein resides in the host membrane. The polypeptide is G-protein coupled receptor (U12) (Human herpesvirus 6B (strain Z29) (HHV-6 variant B)).